Here is a 128-residue protein sequence, read N- to C-terminus: Iron-sulfur cluster insertion protein ErpA (128 aa).

Iron-sulfur cluster-binding residues include Cys-56, Cys-120, and Cys-122.

This sequence belongs to the HesB/IscA family. As to quaternary structure, homodimer. It depends on iron-sulfur cluster as a cofactor.

Its function is as follows. Required for insertion of 4Fe-4S clusters for at least IspG. The sequence is that of Iron-sulfur cluster insertion protein ErpA from Xanthomonas euvesicatoria pv. vesicatoria (strain 85-10) (Xanthomonas campestris pv. vesicatoria).